Here is a 2672-residue protein sequence, read N- to C-terminus: eIF-2-alpha kinase activator GCN1 (2672 aa).

HEAT repeat units follow at residues 5–42 (LNWE…QETL), 79–117 (NLEP…WINS), 174–211 (CIFQ…YSKL), 227–267 (QAAL…NPPS), 329–366 (FASS…KISN), 372–410 (EDLT…THYE), 509–549 (HGHA…NSSI), 611–648 (KYVT…IFNI), 706–745 (IQPN…EEGV), 902–932 (QDYL…IDSI), and 933–970 (SLTY…EEDE). One copy of the HEAT 12; degenerate repeat lies at 975–994 (LLLAMEIISVHAEAFEDPSI). An HEAT 13; degenerate repeat occupies 995-1030 (PRISIVEVLLSLLSLPSKAKIAKDCFNALCQSISVA). HEAT repeat units follow at residues 1031–1067 (PNQE…LEPF), 1099–1138 (VVND…FTSE), 1185–1224 (STVA…REPI), 1243–1281 (QNSK…HLQQ), 1284–1321 (ARIH…QFKQ), 1363–1401 (LSEF…SLGK), 1405–1442 (PYVI…HTTG), 1444–1480 (GVKK…LDPT), 1484–1521 (ASLS…VIRN), 1523–1559 (EIQK…HYID), 1561–1598 (PSLA…LVDT), 1603–1640 (PYLQ…RLGE), 1641–1679 (EQFP…GLGL), 1681–1717 (KLDE…CFGS), 1721–1758 (PYIN…NYAT), 1760–1796 (AVDL…QVTG), 1825–1862 (DRRD…NTPR), 1863–1903 (AVKE…RVGG), 1905–1942 (ALSQ…SAST), 1947–1984 (QFQS…VVGK), 1985–2024 (TAVD…VIFP), 2026–2055 (LIPT…SALY), 2057–2095 (RLSI…SVND), 2097–2134 (EGLH…KTVL), 2138–2175 (VYIP…KVDK), 2206–2243 (RGPN…KTPA), 2250–2286 (VSVI…KIPM), 2290–2328 (PFIP…HQPR), 2347–2384 (GVKT…EEML), 2392–2429 (VAYA…ETGK), 2450–2487 (GLID…LEGE), and 2506–2546 (ENIN…FKFD). Residues 1330–1641 (LMEKLLNPTV…GALVERLGEE (312 aa)) form an EF3-like region region. The segment at 2207-2356 (GPNCVLPIFL…GVKTAMLKAL (150 aa)) is RWDBD region.

This sequence belongs to the GCN1 family. As to quaternary structure, interacts (via N- and C-terminus) with GCN2 (via N-terminal RWD domain); this interaction stimulates GCN2 kinase activity in a GCN20-dependent manner in response to amino acid starvation. Interacts (via C-terminus) with GCN20 (via N-terminus); this interaction stimulates GCN2 kinase activity in response to amino acid starvation. The GCN1-GCN20 complex interacts with GCN2 on translating ribosomes in amino acid-starved cells; GCN1 may bind near the ribosomal A-site and promotes the transfer of uncharged tRNAs from the A-site to the tRNA-binding domain in GCN2 for its subsequent kinase activation, and hence allowing GCN4 translational activation and derepression of amino acid biosynthetic genes. Interacts (via C-terminus) with YIH1 (via N-terminus); this interaction reduces the GCN1-GCN20 complex formation and prevents the interaction of GCN1 with GCN2 and GCN2 kinase activation in amino acid-starved cells. Interacts with GIR2; this interaction prevents the interaction of GCN1 with GCN2 and GCN2 kinase activation in amino acid-starved cells. Interacts (via middle region) with RPS10A and RPS10B; these interactions are direct and promote GCN2 kinase activation. Associates (via N-terminus) with ribosomes; this association is stimulated in a ATP- and GCN20-dependent manner and is necessary to activate GCN2 kinase activity.

It is found in the cytoplasm. Ribosome collision sensor that activates a translation quality control pathway when a ribosome has stalled during translation. Directly binds to the ribosome and acts as a sentinel for colliding ribosomes. GCN1 also acts as a positive activator of the integrated stress response (ISR) by mediating activation of GCN2 in response to low amino acid, carbon, or purine availability. Component of the GCN1-GCN20 complex that forms a complex with GCN2 on translating ribosomes: during this process, GCN1 acts as a chaperone to facilitate delivery of uncharged tRNAs that enter the A-site of ribosomes to the tRNA-binding domain of GCN2, and hence stimulating GCN2 kinase activity, leading to phosphorylation of eukaryotic translation initiation factor 2 (eIF-2-alpha/SUI2). eIF-2-alpha/SUI2 phosphorylation converts eIF-2-alpha/SUI2 into a global protein synthesis inhibitor, leading to a global attenuation of cap-dependent translation, and thus to a reduced overall utilization of amino acids, while concomitantly initiating the preferential translation of ISR-specific mRNAs, such as the transcriptional activator GCN4, and hence allowing GCN4-mediated reprogramming of amino acid biosynthetic gene expression to alleviate nutrient depletion. The sequence is that of eIF-2-alpha kinase activator GCN1 from Saccharomyces cerevisiae (strain ATCC 204508 / S288c) (Baker's yeast).